The primary structure comprises 703 residues: Elongation factor G (703 aa).

Residues Asn10–Leu286 form the tr-type G domain. GTP contacts are provided by residues Ala19–Thr26, Asp83–His87, and Asn137–Asp140.

The protein belongs to the TRAFAC class translation factor GTPase superfamily. Classic translation factor GTPase family. EF-G/EF-2 subfamily.

The protein localises to the cytoplasm. Functionally, catalyzes the GTP-dependent ribosomal translocation step during translation elongation. During this step, the ribosome changes from the pre-translocational (PRE) to the post-translocational (POST) state as the newly formed A-site-bound peptidyl-tRNA and P-site-bound deacylated tRNA move to the P and E sites, respectively. Catalyzes the coordinated movement of the two tRNA molecules, the mRNA and conformational changes in the ribosome. The sequence is that of Elongation factor G from Nocardioides sp. (strain ATCC BAA-499 / JS614).